A 418-amino-acid polypeptide reads, in one-letter code: Putative ion-transport protein YfeO (418 aa).

12 helical membrane-spanning segments follow: residues 10-30, 54-74, 99-119, 120-140, 149-169, 186-206, 223-243, 258-278, 300-320, 322-342, 343-363, and 371-391; these read LLLS…LIVV, DSPL…GLVI, ALPG…SLGP, EHPI…RLLP, ILAS…AALI, LFAP…FFHP, ILSG…AVWC, VLVL…GGPV, DYFL…ASGF, GGRI…LHEH, VPAV…VLVV, and LFMA…CIVM.

This sequence belongs to the chloride channel (TC 2.A.49) family.

The protein resides in the cell membrane. The chain is Putative ion-transport protein YfeO from Escherichia coli (strain 55989 / EAEC).